The primary structure comprises 364 residues: Long-wave-sensitive opsin 1 (364 aa).

At 1 to 52 the chain is on the extracellular side; it reads MAQRWGPQKLAGGQPQAGFEDSTQASIFTYTNNNATRDPFEGPNYHIAPRWV. The O-linked (GlcNAc) serine glycan is linked to Ser22. N-linked (GlcNAc...) asparagine glycosylation occurs at Asn34. The chain crosses the membrane as a helical span at residues 53 to 77; the sequence is YHVTSAWMIFVVIASVFTNGLVLAA. Residues 78–89 lie on the Cytoplasmic side of the membrane; sequence TMRFKKLRHPLN. The chain crosses the membrane as a helical span at residues 90–115; sequence WILVNLAVADLAETIIASTISVVNQI. Residues 116-129 lie on the Extracellular side of the membrane; sequence YGYFVLGHPMCVVE. Cys126 and Cys203 are disulfide-bonded. The helical transmembrane segment at 130–149 threads the bilayer; sequence GYTVSLCGITGLWSLAIISW. At 150-168 the chain is on the cytoplasmic side; it reads ERWMVVCKPFGNVRFDAKL. A helical membrane pass occupies residues 169–192; that stretch reads AVAGIAFSWIWAAVWTAPPIFGWS. At 193-218 the chain is on the extracellular side; that stretch reads RYWPHGLKTSCGPDVFSGSSYPGVQS. A helical transmembrane segment spans residues 219 to 246; the sequence is YMIVLMITCCIIPLSVIVLCYLQVWLAI. Residues 247-268 lie on the Cytoplasmic side of the membrane; it reads RAVAKQQKESESTQKAEKEVTR. The helical transmembrane segment at 269 to 292 threads the bilayer; it reads MVMVMVFAFCLCWGPYTFFACFAA. The Extracellular segment spans residues 293 to 300; that stretch reads AHPGYAFH. Residues 301–325 form a helical membrane-spanning segment; it reads PLVAALPAYFAKSATIYNPIIYVFM. Residue Lys312 is modified to N6-(retinylidene)lysine. Residues 326-364 are Cytoplasmic-facing; it reads NRQFRNCILQLFGKKVDDSSELSSVSKTEASSVSSVSPA.

Belongs to the G-protein coupled receptor 1 family. Opsin subfamily. In terms of processing, phosphorylated on some or all of the serine and threonine residues present in the C-terminal region. As to expression, the three color pigments are found in the cone photoreceptor cells. Expressed in retina.

Its subcellular location is the membrane. Functionally, visual pigments are the light-absorbing molecules that mediate vision. They consist of an apoprotein, opsin, covalently linked to cis-retinal. The polypeptide is Long-wave-sensitive opsin 1 (OPN1LW) (Equus caballus (Horse)).